A 441-amino-acid polypeptide reads, in one-letter code: Ribosomal protein uS12 methylthiotransferase RimO (441 aa).

Positions 7 to 117 constitute an MTTase N-terminal domain; it reads ASIAMISLGC…VVLEVHRAAP (111 aa). [4Fe-4S] cluster contacts are provided by Cys-16, Cys-52, Cys-81, Cys-150, Cys-154, and Cys-157. The Radical SAM core domain maps to 136–373; it reads LTPRHYAYLK…MAHQQAISAA (238 aa). The TRAM domain maps to 376-441; that stretch reads QTRVGREIDV…DEYDLHGDAV (66 aa).

The protein belongs to the methylthiotransferase family. RimO subfamily. It depends on [4Fe-4S] cluster as a cofactor.

The protein localises to the cytoplasm. It catalyses the reaction L-aspartate(89)-[ribosomal protein uS12]-hydrogen + (sulfur carrier)-SH + AH2 + 2 S-adenosyl-L-methionine = 3-methylsulfanyl-L-aspartate(89)-[ribosomal protein uS12]-hydrogen + (sulfur carrier)-H + 5'-deoxyadenosine + L-methionine + A + S-adenosyl-L-homocysteine + 2 H(+). In terms of biological role, catalyzes the methylthiolation of an aspartic acid residue of ribosomal protein uS12. This chain is Ribosomal protein uS12 methylthiotransferase RimO, found in Bordetella petrii (strain ATCC BAA-461 / DSM 12804 / CCUG 43448).